Reading from the N-terminus, the 1192-residue chain is DNA ligase 1 (1192 aa).

Disordered regions lie at residues 29 to 257 (ELNK…KEKE) and 280 to 517 (EKEL…KSTQ). Residues 42–56 (EAVVKEKVEKKEKKE) show a composition bias toward basic and acidic residues. Residues 70–113 (EEEEEEQEEQDGEEEQEEEEEYQQQDEEIEEDINGEEEMELDEN) are compositionally biased toward acidic residues. The span at 141–155 (KTIENKETKKPEKQS) shows a compositional bias: basic and acidic residues. Residues 172–198 (DDEEDEEDENKTDDNDLDDMLDDDSDN) show a composition bias toward acidic residues. Basic and acidic residues-rich tracts occupy residues 199–257 (EKDS…KEKE) and 280–368 (EKEL…RANA). Low complexity-rich tracts occupy residues 371 to 382 (KSSVPTSTSKNS) and 410 to 434 (STTTTTTTTTTSTATTISSKSISSP). Residues 435 to 467 (SKKEEKEVITSKKQVEATKVEVKKEKEKEKEKE) show a composition bias toward basic and acidic residues. Residues 468–511 (KEDDEEEEEEEEDDDEKLEDIDEEEYEEEEEEDEEGISENEEEE) are compositionally biased toward acidic residues. The tract at residues 724 to 733 (KLRIGLAERS) is interaction with target DNA. Glu-842 serves as a coordination point for ATP. Lys-844 functions as the N6-AMP-lysine intermediate in the catalytic mechanism. The ATP site is built by Arg-849 and Arg-865. A Mg(2+)-binding site is contributed by Glu-897. Positions 918–920 (ARK) are interaction with target DNA. Residue Glu-996 coordinates Mg(2+). The ATP site is built by Lys-1001, Arg-1014, and Lys-1020. The disordered stretch occupies residues 1157–1192 (DKSPEDATSSDQVVDMYQNQKINSQSSKINEKDEDY). Positions 1162 to 1184 (DATSSDQVVDMYQNQKINSQSSK) are enriched in polar residues.

It belongs to the ATP-dependent DNA ligase family. Mg(2+) is required as a cofactor.

The protein resides in the nucleus. It catalyses the reaction ATP + (deoxyribonucleotide)n-3'-hydroxyl + 5'-phospho-(deoxyribonucleotide)m = (deoxyribonucleotide)n+m + AMP + diphosphate.. In terms of biological role, DNA ligase that seals nicks in double-stranded DNA during DNA replication, DNA recombination and DNA repair. This chain is DNA ligase 1 (lig1), found in Dictyostelium discoideum (Social amoeba).